A 251-amino-acid chain; its full sequence is Ubiquinone/menaquinone biosynthesis C-methyltransferase UbiE (251 aa).

S-adenosyl-L-methionine contacts are provided by residues Thr-74, Asp-95, 123–124 (NA), and Ser-140.

The protein belongs to the class I-like SAM-binding methyltransferase superfamily. MenG/UbiE family.

It carries out the reaction a 2-demethylmenaquinol + S-adenosyl-L-methionine = a menaquinol + S-adenosyl-L-homocysteine + H(+). The enzyme catalyses a 2-methoxy-6-(all-trans-polyprenyl)benzene-1,4-diol + S-adenosyl-L-methionine = a 5-methoxy-2-methyl-3-(all-trans-polyprenyl)benzene-1,4-diol + S-adenosyl-L-homocysteine + H(+). It participates in quinol/quinone metabolism; menaquinone biosynthesis; menaquinol from 1,4-dihydroxy-2-naphthoate: step 2/2. It functions in the pathway cofactor biosynthesis; ubiquinone biosynthesis. Methyltransferase required for the conversion of demethylmenaquinol (DMKH2) to menaquinol (MKH2) and the conversion of 2-polyprenyl-6-methoxy-1,4-benzoquinol (DDMQH2) to 2-polyprenyl-3-methyl-6-methoxy-1,4-benzoquinol (DMQH2). This Yersinia pestis bv. Antiqua (strain Antiqua) protein is Ubiquinone/menaquinone biosynthesis C-methyltransferase UbiE.